Reading from the N-terminus, the 330-residue chain is Aspartate--ammonia ligase (330 aa).

The protein belongs to the class-II aminoacyl-tRNA synthetase family. AsnA subfamily.

The protein localises to the cytoplasm. The catalysed reaction is L-aspartate + NH4(+) + ATP = L-asparagine + AMP + diphosphate + H(+). It functions in the pathway amino-acid biosynthesis; L-asparagine biosynthesis; L-asparagine from L-aspartate (ammonia route): step 1/1. The chain is Aspartate--ammonia ligase from Klebsiella pneumoniae (strain 342).